Consider the following 315-residue polypeptide: Putative pyruvate, phosphate dikinase regulatory protein (315 aa).

Residues 1–32 (MGPFGARASPEAGQVVKQPLTDDPQESLAQGE) are disordered. Residue 189 to 196 (GVSRTSKT) coordinates ADP.

The protein belongs to the pyruvate, phosphate/water dikinase regulatory protein family. PDRP subfamily.

The enzyme catalyses N(tele)-phospho-L-histidyl/L-threonyl-[pyruvate, phosphate dikinase] + ADP = N(tele)-phospho-L-histidyl/O-phospho-L-threonyl-[pyruvate, phosphate dikinase] + AMP + H(+). It catalyses the reaction N(tele)-phospho-L-histidyl/O-phospho-L-threonyl-[pyruvate, phosphate dikinase] + phosphate + H(+) = N(tele)-phospho-L-histidyl/L-threonyl-[pyruvate, phosphate dikinase] + diphosphate. Its function is as follows. Bifunctional serine/threonine kinase and phosphorylase involved in the regulation of the pyruvate, phosphate dikinase (PPDK) by catalyzing its phosphorylation/dephosphorylation. In Caulobacter vibrioides (strain ATCC 19089 / CIP 103742 / CB 15) (Caulobacter crescentus), this protein is Putative pyruvate, phosphate dikinase regulatory protein.